A 40-amino-acid chain; its full sequence is Photosystem II reaction center protein J (40 aa).

The helical transmembrane segment at 8–28 threads the bilayer; sequence IPLWIIGTVTGILVIGLVGIF.

The protein belongs to the PsbJ family. As to quaternary structure, PSII is composed of 1 copy each of membrane proteins PsbA, PsbB, PsbC, PsbD, PsbE, PsbF, PsbH, PsbI, PsbJ, PsbK, PsbL, PsbM, PsbT, PsbX, PsbY, PsbZ, Psb30/Ycf12, at least 3 peripheral proteins of the oxygen-evolving complex and a large number of cofactors. It forms dimeric complexes.

It is found in the plastid. It localises to the chloroplast thylakoid membrane. Its function is as follows. One of the components of the core complex of photosystem II (PSII). PSII is a light-driven water:plastoquinone oxidoreductase that uses light energy to abstract electrons from H(2)O, generating O(2) and a proton gradient subsequently used for ATP formation. It consists of a core antenna complex that captures photons, and an electron transfer chain that converts photonic excitation into a charge separation. This is Photosystem II reaction center protein J from Jasminum nudiflorum (Winter jasmine).